A 142-amino-acid polypeptide reads, in one-letter code: RNA-directed DNA polymerase homolog (142 aa).

Its subcellular location is the mitochondrion. The enzyme catalyses RNA(n) + a ribonucleoside 5'-triphosphate = RNA(n+1) + diphosphate. In Oenothera berteroana (Bertero's evening primrose), this protein is RNA-directed DNA polymerase homolog.